The following is a 1021-amino-acid chain: Ubiquitin-activating enzyme E1 1 (1021 aa).

ATP is bound by residues arginine 22, alanine 442, and aspartate 468. Residue aspartate 470 participates in Mg(2+) binding. ATP contacts are provided by residues arginine 479, lysine 492, valine 518, and 542-543 (DN). Aspartate 542 contacts Mg(2+). The active-site Glycyl thioester intermediate is cysteine 598.

This sequence belongs to the ubiquitin-activating E1 family. Monomer.

Its subcellular location is the cytoplasm. The protein localises to the nucleus. It carries out the reaction ATP + ubiquitin + [E1 ubiquitin-activating enzyme]-L-cysteine = AMP + diphosphate + S-ubiquitinyl-[E1 ubiquitin-activating enzyme]-L-cysteine.. The protein operates within protein modification; protein ubiquitination. Its function is as follows. E1 ubiquitin-activating enzyme that catalyzes the first step in ubiquitin conjugation to mark cellular proteins for degradation through the ubiquitin-proteasome system. Activates ubiquitin by first adenylating its C-terminal glycine residue with ATP, and thereafter linking this residue to the side chain of a cysteine residue in E1, yielding a ubiquitin-E1 thioester and free AMP. The polypeptide is Ubiquitin-activating enzyme E1 1 (UBA1) (Candida albicans (strain WO-1) (Yeast)).